The chain runs to 327 residues: GTPase Obg (327 aa).

The region spanning 3–160 (NKFTDFIKIY…FIFVLELKIL (158 aa)) is the Obg domain. An OBG-type G domain is found at 161–327 (ADVGLIGLPN…LIYYICNILS (167 aa)). GTP-binding positions include 167 to 174 (GLPNSGKS), 192 to 196 (FTTLN), 214 to 217 (DIPG), 281 to 284 (SKSD), and 308 to 310 (SSF). Ser174 and Thr194 together coordinate Mg(2+).

This sequence belongs to the TRAFAC class OBG-HflX-like GTPase superfamily. OBG GTPase family. In terms of assembly, monomer. Mg(2+) serves as cofactor.

The protein resides in the cytoplasm. Its function is as follows. An essential GTPase which binds GTP, GDP and possibly (p)ppGpp with moderate affinity, with high nucleotide exchange rates and a fairly low GTP hydrolysis rate. Plays a role in control of the cell cycle, stress response, ribosome biogenesis and in those bacteria that undergo differentiation, in morphogenesis control. In Karelsulcia muelleri (strain GWSS) (Sulcia muelleri), this protein is GTPase Obg.